Consider the following 182-residue polypeptide: Large ribosomal subunit protein uL5 (182 aa).

This sequence belongs to the universal ribosomal protein uL5 family. In terms of assembly, part of the 50S ribosomal subunit; part of the 5S rRNA/L5/L18/L25 subcomplex. Contacts the 5S rRNA and the P site tRNA. Forms a bridge to the 30S subunit in the 70S ribosome.

Its function is as follows. This is one of the proteins that bind and probably mediate the attachment of the 5S RNA into the large ribosomal subunit, where it forms part of the central protuberance. In the 70S ribosome it contacts protein S13 of the 30S subunit (bridge B1b), connecting the 2 subunits; this bridge is implicated in subunit movement. Contacts the P site tRNA; the 5S rRNA and some of its associated proteins might help stabilize positioning of ribosome-bound tRNAs. The chain is Large ribosomal subunit protein uL5 from Thermus thermophilus (strain ATCC BAA-163 / DSM 7039 / HB27).